Here is a 176-residue protein sequence, read N- to C-terminus: Large ribosomal subunit protein uL6 (176 aa).

This sequence belongs to the universal ribosomal protein uL6 family. Part of the 50S ribosomal subunit.

This protein binds to the 23S rRNA, and is important in its secondary structure. It is located near the subunit interface in the base of the L7/L12 stalk, and near the tRNA binding site of the peptidyltransferase center. The polypeptide is Large ribosomal subunit protein uL6 (Lacticaseibacillus paracasei (strain ATCC 334 / BCRC 17002 / CCUG 31169 / CIP 107868 / KCTC 3260 / NRRL B-441) (Lactobacillus paracasei)).